The primary structure comprises 158 residues: Snaclec stejaggregin-A subunit alpha (158 aa).

Residues 1 to 23 (MGRFISVSFGLLVVFLSLSGTGA) form the signal peptide. 3 disulfides stabilise this stretch: Cys27/Cys38, Cys55/Cys152, and Cys127/Cys144. The 120-residue stretch at 34–153 (YDWYCYKPFN…CQAKNPFVCK (120 aa)) folds into the C-type lectin domain.

The protein belongs to the snaclec family. In terms of assembly, heteromultimer; disulfide-linked. As to expression, expressed by the venom gland.

It is found in the secreted. Its function is as follows. Interferes with one step of hemostasis (modulation of platelet aggregation, or coagulation cascade, for example). The chain is Snaclec stejaggregin-A subunit alpha from Trimeresurus stejnegeri (Chinese green tree viper).